Consider the following 281-residue polypeptide: Acetyl-coenzyme A carboxylase carboxyl transferase subunit beta (281 aa).

Residues 24 to 281 (GLWYKSPKGK…TKLLTMLANN (258 aa)) form the CoA carboxyltransferase N-terminal domain.

It belongs to the AccD/PCCB family. Acetyl-CoA carboxylase is a heterohexamer composed of biotin carboxyl carrier protein (AccB), biotin carboxylase (AccC) and two subunits each of ACCase subunit alpha (AccA) and ACCase subunit beta (AccD).

It is found in the cytoplasm. The enzyme catalyses N(6)-carboxybiotinyl-L-lysyl-[protein] + acetyl-CoA = N(6)-biotinyl-L-lysyl-[protein] + malonyl-CoA. It participates in lipid metabolism; malonyl-CoA biosynthesis; malonyl-CoA from acetyl-CoA: step 1/1. In terms of biological role, component of the acetyl coenzyme A carboxylase (ACC) complex. Biotin carboxylase (BC) catalyzes the carboxylation of biotin on its carrier protein (BCCP) and then the CO(2) group is transferred by the transcarboxylase to acetyl-CoA to form malonyl-CoA. This Amoebophilus asiaticus (strain 5a2) protein is Acetyl-coenzyme A carboxylase carboxyl transferase subunit beta.